The following is a 61-amino-acid chain: Temporin-CG3 (61 aa).

The N-terminal stretch at 1 to 22 is a signal peptide; that stretch reads MFTMKKPLLLLFFLATINLSLC. A propeptide spans 23-44 (removed in mature form); sequence EQERNAEEERRDEPDERNAEVE.

It belongs to the frog skin active peptide (FSAP) family. Temporin subfamily. As to expression, expressed by the skin glands.

It localises to the secreted. In terms of biological role, antimicrobial peptide active against a variety of Gram-positive bacterial strains but not against Gram-negative bacteria. Has weak antifungal activity against a slime mold isolate. Has weak hemolytic activity against human erythrocytes. The protein is Temporin-CG3 of Amolops chunganensis (Chungan torrent frog).